The following is a 553-amino-acid chain: Peroxiredoxin-2A (553 aa).

The 157-residue stretch at 4–160 folds into the Thioredoxin domain; the sequence is IDVGDFVPDG…LMKMTTTTMS (157 aa). Cysteine 51 (cysteine sulfenic acid (-SOH) intermediate) is an active-site residue. Positions 156-201 constitute an F-box domain; the sequence is TTTMSNLPTDLLEEIISRVPRKYMRAVRLTCKRWNGMFKSQSFTKM.

It belongs to the peroxiredoxin family. Prx5 subfamily. Monomer.

It carries out the reaction [glutaredoxin]-dithiol + a hydroperoxide = [glutaredoxin]-disulfide + an alcohol + H2O. Thiol-specific peroxidase that catalyzes the reduction of hydrogen peroxide and organic hydroperoxides to water and alcohols, respectively. Plays a role in cell protection against oxidative stress by detoxifying peroxides. May be involved in intracellular redox signaling. This chain is Peroxiredoxin-2A (PRXIIA), found in Arabidopsis thaliana (Mouse-ear cress).